Consider the following 301-residue polypeptide: D-alanine--D-alanine ligase (301 aa).

The ATP-grasp domain occupies 99-294 (KCILKAANIR…FPELIDMIID (196 aa)). 126–181 (IEKMGYPVVVKPTHGGSSVATFIIKEEKDIKDAVIEGFKWDSEVIIEKFIKGDEIT) contacts ATP. Mg(2+) is bound by residues aspartate 248, glutamate 261, and asparagine 263.

Belongs to the D-alanine--D-alanine ligase family. Requires Mg(2+) as cofactor. The cofactor is Mn(2+).

It localises to the cytoplasm. The catalysed reaction is 2 D-alanine + ATP = D-alanyl-D-alanine + ADP + phosphate + H(+). The protein operates within cell wall biogenesis; peptidoglycan biosynthesis. Functionally, cell wall formation. The polypeptide is D-alanine--D-alanine ligase (Clostridium botulinum (strain Alaska E43 / Type E3)).